Consider the following 412-residue polypeptide: MLRWLTAGESHGPELIAVLEGLPAGVPVSLDGIRADLARRKLGYGRGARMAFEQDELSLSTGVVHGRTLGSPIAVRIGNTEWPKWVDIMSPEPVDPEKLQGARAAALTRPRPGHADLVGMQKYDFDEARPVLERASARETAARVALGAVARAFLAELGITLVSHTLSIGPVRVPEGAPLPTPADVDALDADPLRCFHPETSARMVAEVDDTKSSGDTVGGVVEVLAYDLPPGLGSHVHWDRRLDSKLAAALMGIQAIKGVEVGDGFLTTTRRGSEAHDELFSTDAGIGRSTDRAGGTEGGMSTGTVLRVRAGMKPIATVPRALRTIDTATGGAAPANHQRSDVCAVPAAGVVAEAMVALTLADAVLEKFGGDSVGETLRNLRGYLDAIPEGRRTGADLVDEADAAPPAAPEA.

Residues arginine 40 and arginine 46 each contribute to the NADP(+) site. Residues 134–136 (RAS), 255–256 (QA), glycine 299, 314–318 (KPIAT), and arginine 340 each bind FMN.

Belongs to the chorismate synthase family. As to quaternary structure, homotetramer. FMNH2 is required as a cofactor.

It carries out the reaction 5-O-(1-carboxyvinyl)-3-phosphoshikimate = chorismate + phosphate. Its pathway is metabolic intermediate biosynthesis; chorismate biosynthesis; chorismate from D-erythrose 4-phosphate and phosphoenolpyruvate: step 7/7. Catalyzes the anti-1,4-elimination of the C-3 phosphate and the C-6 proR hydrogen from 5-enolpyruvylshikimate-3-phosphate (EPSP) to yield chorismate, which is the branch point compound that serves as the starting substrate for the three terminal pathways of aromatic amino acid biosynthesis. This reaction introduces a second double bond into the aromatic ring system. This is Chorismate synthase from Clavibacter michiganensis subsp. michiganensis (strain NCPPB 382).